We begin with the raw amino-acid sequence, 333 residues long: Minor fimbrium tip subunit MfA4 (333 aa).

A signal peptide spans 1–18 (MKKYLLYASLLTSVLLFS). Residue C19 is the site of N-palmitoyl cysteine attachment. Residue C19 is the site of S-diacylglycerol cysteine attachment. Residues 19 to 53 (CSKNNPSEPVEDRSIEISIRVDDFTKTGETVRYER) constitute a propeptide that is removed on maturation.

This sequence belongs to the bacteroidetes fimbrillin superfamily. FimA/Mfa1 family. In terms of assembly, component of the fimbrium tip. Minor fimbriae are composed of a structural subunit, most often Mfa1, and the accessory subunits Mfa3, Mfa4 and Mfa5. Mfa4 is required for Mfa3 and Mfa5 insertion into the fimbrium. Fimbrium assembly occurs by linear, head-to-tail oligomerization of fimbrial subunits. This is mediated via insertion of a C-terminal beta-strand from one subunit into a groove in the N-terminal domain of the following subunit.

Its subcellular location is the fimbrium. It is found in the cell outer membrane. Its function is as follows. Tip subunit of the minor fimbriae. These filamentous pili are attached to the cell surface; they mediate biofilm formation, adhesion onto host cells and onto other bacteria that are part of the oral microbiome. They play an important role in invasion of periodontal tissues and are recognized as major virulence factors. The chain is Minor fimbrium tip subunit MfA4 from Porphyromonas gingivalis (strain ATCC 33277 / DSM 20709 / CIP 103683 / JCM 12257 / NCTC 11834 / 2561).